Reading from the N-terminus, the 379-residue chain is MPLAAEPDDAHEERENQQLLITTKGGPGLEGLVVGSYCHDVLIRGGRIVGETLGGAAAFVSNVLDAASPQGAALNETSPFVVVAKVGHDFIYARAPASARHPPLLCSSPTTSFHAQFSETAASAHAPDRELRRVRACDPIYPADLPDRRFAYGLAVGVAGEVLPETLEQMIRLCRTVLVDAQALIRAFDGDGAVGHVALGDTPYARLLPRVAFVKASSEEAPYVGVETTRRQCCVIVTEGRDGCRLYWDGGEAHVAPFPAVQVDPTGAGDSFLAGFAAGLLWGLSATDAALLGNFFGAAAVSQVGVPTFHPKMLQAVKEILEEKTRKRSSPCMNGASFTLEKSNMHNELHAALQEAAVLMSEQQQADPANGSGGDICSA.

ATP is bound by residues Ser-217, 267–270 (GAGD), and Asn-294. The active-site Proton acceptor is the Asp-270.

The protein belongs to the carbohydrate kinase pfkB family.

It carries out the reaction myo-inositol + ATP = 1D-myo-inositol 3-phosphate + ADP + H(+). In terms of biological role, kinase that phosphorylates myo-inositol to produce multiple myo-inositol monophosphates, Ins(1)P, Ins(3)P, Ins(4)P, Ins(5)P and Ins(6)P. Participates in phytic acid biosynthesis in developing seeds. Phytic acid is the primary storage form of phosphorus in cereal grains and other plant seeds. In Zea mays (Maize), this protein is Inositol 3-kinase.